A 592-amino-acid chain; its full sequence is Arginine--tRNA ligase (592 aa).

The short motif at 112 to 122 is the 'HIGH' region element; the sequence is VNPNKELHVGH.

This sequence belongs to the class-I aminoacyl-tRNA synthetase family. As to quaternary structure, monomer.

The protein localises to the cytoplasm. The enzyme catalyses tRNA(Arg) + L-arginine + ATP = L-arginyl-tRNA(Arg) + AMP + diphosphate. The protein is Arginine--tRNA ligase of Thermus thermophilus (strain ATCC BAA-163 / DSM 7039 / HB27).